Here is a 650-residue protein sequence, read N- to C-terminus: Acetyl-coenzyme A synthetase (650 aa).

CoA is bound by residues 191-194 (RGGR), threonine 311, and asparagine 335. Residues 387 to 389 (GEP), 411 to 416 (DTWWQT), aspartate 500, and arginine 515 each bind ATP. Serine 523 serves as a coordination point for CoA. Arginine 526 is a binding site for ATP. 3 residues coordinate Mg(2+): valine 537, histidine 539, and valine 542. Residue arginine 584 coordinates CoA. Lysine 609 is modified (N6-acetyllysine).

The protein belongs to the ATP-dependent AMP-binding enzyme family. It depends on Mg(2+) as a cofactor. Post-translationally, acetylated. Deacetylation by the SIR2-homolog deacetylase activates the enzyme.

It catalyses the reaction acetate + ATP + CoA = acetyl-CoA + AMP + diphosphate. Its function is as follows. Catalyzes the conversion of acetate into acetyl-CoA (AcCoA), an essential intermediate at the junction of anabolic and catabolic pathways. AcsA undergoes a two-step reaction. In the first half reaction, AcsA combines acetate with ATP to form acetyl-adenylate (AcAMP) intermediate. In the second half reaction, it can then transfer the acetyl group from AcAMP to the sulfhydryl group of CoA, forming the product AcCoA. This chain is Acetyl-coenzyme A synthetase, found in Shewanella sediminis (strain HAW-EB3).